The chain runs to 278 residues: Envelope glycoprotein L (278 aa).

Residues 1 to 30 (MCRRPDCGFSFSPGPVVLLWCCLLLPIVSS) form the signal peptide. The region spanning 43-256 (VPAECPELTR…DKYYAGLPPE (214 aa)) is the gL betaherpesvirus-type domain. Cysteines 154 and 159 form a disulfide.

It belongs to the herpesviridae glycoprotein L (gL) family. Betaherpesvirinae gL subfamily. Interacts with glycoprotein H (gH); this interaction is necessary for the correct processing and cell surface expression of gH. Forms the envelope pentamer complex (PC) composed of gH, gL, UL128, UL130, and UL131A. The pentamer interacts with host NRP2. Forms the envelope trimer complex composed of gH, gL, and gO. The trimer interacts with host PDGFRA. The trimer also interacts with host EPHA2.

The protein localises to the virion membrane. It localises to the host cell membrane. It is found in the host Golgi apparatus. Its subcellular location is the host trans-Golgi network. The heterodimer glycoprotein H-glycoprotein L is required for the fusion of viral and plasma membranes leading to virus entry into the host cell. Acts as a functional inhibitor of gH and maintains gH in an inhibited form. Upon binding to host integrins, gL dissociates from gH leading to activation of the viral fusion glycoproteins gB and gH. In human cytomegalovirus, forms two distincts complexes to mediate viral entry, a trimer and a pentamer at the surface of the virion envelope. The gH-gL-gO trimer is required for infection in fibroblasts by interacting with host PDGFRA, and in glioblastoma cells by interacting with host EPHA2. The gH-gL-UL128-UL130-UL131A pentamer is essential for viral entry in epithelial, endothelial and myeloid cells via interaction with host NRP2. This chain is Envelope glycoprotein L, found in Homo sapiens (Human).